The chain runs to 644 residues: Exoribonuclease 2 (644 aa).

The RNB domain maps to 189–516 (REDLTSLDFV…NHRLLKAVIK (328 aa)). The S1 motif domain maps to 561 to 643 (GTRFAAEIVD…ETRSIIARPV (83 aa)).

This sequence belongs to the RNR ribonuclease family. RNase II subfamily.

The protein resides in the cytoplasm. It carries out the reaction Exonucleolytic cleavage in the 3'- to 5'-direction to yield nucleoside 5'-phosphates.. Its function is as follows. Involved in mRNA degradation. Hydrolyzes single-stranded polyribonucleotides processively in the 3' to 5' direction. The sequence is that of Exoribonuclease 2 from Shigella flexneri.